The sequence spans 384 residues: N-acetylneuraminate epimerase (384 aa).

The signal sequence occupies residues Met-1–Ala-29. Kelch repeat units lie at residues Val-51–Asn-95, Lys-97–Asn-149, Thr-151–Tyr-184, Asn-185–Asn-230, Leu-233–Ala-282, Gln-304–Asp-353, and Val-355–Lys-384. Glu-239 acts as the Proton acceptor in catalysis.

Belongs to the NanM family. In terms of assembly, homodimer.

The protein resides in the periplasm. It catalyses the reaction N-acetyl-alpha-neuraminate = N-acetyl-beta-neuraminate. Converts alpha-N-acetylneuranimic acid (Neu5Ac) to the beta-anomer, accelerating the equilibrium between the alpha- and beta-anomers. Probably facilitates sialidase-negative bacteria to compete successfully for limited amounts of extracellular Neu5Ac, which is likely taken up in the beta-anomer. In addition, the rapid removal of sialic acid from solution might be advantageous to the bacterium to damp down host responses. This is N-acetylneuraminate epimerase from Salmonella typhi.